The sequence spans 30 residues: Photosystem I reaction center subunit XII (30 aa).

A helical transmembrane segment spans residues 7–29 (IYTVLCIALLAGILAIRLGSTLY).

This sequence belongs to the PsaM family.

It localises to the plastid. It is found in the chloroplast thylakoid membrane. The protein is Photosystem I reaction center subunit XII of Phaeodactylum tricornutum (strain CCAP 1055/1).